Here is a 428-residue protein sequence, read N- to C-terminus: 3-phosphoshikimate 1-carboxyvinyltransferase (428 aa).

Lys-23, Ser-24, and Arg-28 together coordinate 3-phosphoshikimate. Lys-23 is a binding site for phosphoenolpyruvate. Residues Gly-97 and Arg-125 each coordinate phosphoenolpyruvate. 7 residues coordinate 3-phosphoshikimate: Ser-170, Ser-171, Gln-172, Ser-198, Asp-314, Asn-337, and Lys-341. Gln-172 is a phosphoenolpyruvate binding site. Asp-314 acts as the Proton acceptor in catalysis. Phosphoenolpyruvate-binding residues include Arg-345, Arg-387, and Lys-412.

Belongs to the EPSP synthase family. Monomer.

It is found in the cytoplasm. The enzyme catalyses 3-phosphoshikimate + phosphoenolpyruvate = 5-O-(1-carboxyvinyl)-3-phosphoshikimate + phosphate. Its pathway is metabolic intermediate biosynthesis; chorismate biosynthesis; chorismate from D-erythrose 4-phosphate and phosphoenolpyruvate: step 6/7. In terms of biological role, catalyzes the transfer of the enolpyruvyl moiety of phosphoenolpyruvate (PEP) to the 5-hydroxyl of shikimate-3-phosphate (S3P) to produce enolpyruvyl shikimate-3-phosphate and inorganic phosphate. This chain is 3-phosphoshikimate 1-carboxyvinyltransferase, found in Buchnera aphidicola subsp. Schizaphis graminum (strain Sg).